A 314-amino-acid chain; its full sequence is Fumarylacetoacetate hydrolase domain-containing protein 2 (314 aa).

Residues Glu159, Glu161, and Asp190 each coordinate a divalent metal cation. Lys203 is modified (N6-acetyllysine; alternate). N6-succinyllysine; alternate is present on Lys203. Lys234 is modified (N6-acetyllysine).

It belongs to the FAH family. Requires Ca(2+) as cofactor. Mg(2+) is required as a cofactor.

In terms of biological role, may have hydrolase activity. This chain is Fumarylacetoacetate hydrolase domain-containing protein 2 (FAHD2), found in Pongo abelii (Sumatran orangutan).